We begin with the raw amino-acid sequence, 351 residues long: Outer membrane porin PhoE (351 aa).

A signal peptide spans 1-21 (MKKSTLALVVMGITASASVQA).

This sequence belongs to the Gram-negative porin family. Homotrimer.

It is found in the cell outer membrane. In terms of biological role, uptake of inorganic phosphate, phosphorylated compounds, and some other negatively charged solutes. The sequence is that of Outer membrane porin PhoE (phoE) from Citrobacter freundii.